Here is a 414-residue protein sequence, read N- to C-terminus: MTTAAGLSGIDLTDLDNFADGFPHHLFAIHRREAPVYWHRPTEHTPDGEGFWSVATYAETLEVLRDPVTYSSVTGGQRRFGGTVLQDLPVAGQVLNMMDDPRHTRIRRLVSSGLTPRMIRRVEDDLRRRARGLLDGVEPGAPFDFVVEIAAELPMQMICILLGVPETDRHWLFEAVEPGFDFRGSRRATMPRLNVEDAGSRLYTYALELIAGKRAEPADDMLSVVANATIDDPDAPALSDAELYLFFHLLFSAGAETTRNSIAGGLLALAENPDQLQTLRSDFELLPTAIEEIVRWTSPSPSKRRTASRAVSLGGQPIEAGQKVVVWEGSANRDPSVFDRADEFDITRKPNPHLGFGQGVHYCLGANLARLELRVLFEELLSRFGSVRVVEPAEWTRSNRHTGIRHLVVELRGG.

Cysteine 363 is a binding site for heme.

Belongs to the cytochrome P450 family. Heme serves as cofactor.

In Mycobacterium tuberculosis (strain CDC 1551 / Oshkosh), this protein is Putative cytochrome P450 126 (cyp126).